Consider the following 473-residue polypeptide: MTNIQLVIKDDSNSITLNVNRDTLCSKIDYFNKMFNNFAESTKEIVSIYVLNAQIVRDLIDSKIYDREITADKKNWKYILDLYKCQDYFGIEIDSELMKDLLVPREYFGHLIDVIDLIGYNKHTVNTVVQNIPIDFNVKVFPPKLINKMVPVITDSIKVFGSKTSIDIVCLKTREIIYSLPTIGSLCNCFCYVKNKKMVFFINELSQLVAFDIRYGTSNIISLRIKKEDFNTNPYYRKNILLTDVLYRRNSDLQIIPTVNILYNKISNQLIFCHNHKHVVIIDVESYRVINMYTHSNYFDVNIDNICRYVNHNTLAINHSSNIIALWNLESYEIHTRPKPNGIINLTALIYYNTYIYKNKFQKIFVNEFYLPNKPFELKPKHSGEITFVGCSPDNKYIVIVVDYCQITIFDMEYTLSLYASCKCVSRTYIRYEYPLSIIFGSNNTMSILFETNKKNIVHVYSLKSKKSLKNYV.

The 71-residue stretch at 2-72 folds into the BTB domain; sequence TNIQLVIKDD…KIYDREITAD (71 aa).

It belongs to the mimivirus BTB/WD family.

This Acanthamoeba polyphaga mimivirus (APMV) protein is Putative BTB/POZ domain-containing protein R765.